The primary structure comprises 338 residues: Mugineic-acid 3-dioxygenase (338 aa).

The 104-residue stretch at 180-283 folds into the Fe2OG dioxygenase domain; the sequence is DISGGRVVVD…RLSVASFIVP (104 aa). Fe cation is bound by residues histidine 208, aspartate 210, and histidine 264. Arginine 274 is a 2-oxoglutarate binding site.

It belongs to the iron/ascorbate-dependent oxidoreductase family. Fe(2+) is required as a cofactor. Requires L-ascorbate as cofactor. Expressed in roots, but not in leaves.

The enzyme catalyses mugineate + 2-oxoglutarate + O2 = 3-epihydroxymugineate + succinate + CO2 + H(+). It carries out the reaction 2'-deoxymugineate + 2-oxoglutarate + O2 = 3-epihydroxy-2'-deoxymugineate + succinate + CO2 + H(+). Its function is as follows. Involved in the biosynthesis of mugineic acid family of phytosiderophores. Hydroxylates the C-3 positions of mugineic acid (MA) and 2'-deoxymugineic acid (DMA). May be involved in boron tolerance. The sequence is that of Mugineic-acid 3-dioxygenase (IDS2) from Hordeum vulgare (Barley).